A 93-amino-acid chain; its full sequence is Putative pterin-4-alpha-carbinolamine dehydratase (93 aa).

This sequence belongs to the pterin-4-alpha-carbinolamine dehydratase family.

The catalysed reaction is (4aS,6R)-4a-hydroxy-L-erythro-5,6,7,8-tetrahydrobiopterin = (6R)-L-erythro-6,7-dihydrobiopterin + H2O. This Roseiflexus castenholzii (strain DSM 13941 / HLO8) protein is Putative pterin-4-alpha-carbinolamine dehydratase.